Here is a 376-residue protein sequence, read N- to C-terminus: Salivary hyaluronidase (376 aa).

Positions 1–16 are cleaved as a signal peptide; sequence MNWIFHLFCAVYGIFC. 2 disulfides stabilise this stretch: Cys32-Cys328 and Cys203-Cys217. Residues Asn36, Asn55, Asn77, and Asn88 are each glycosylated (N-linked (GlcNAc...) asparagine). Glu118 serves as the catalytic Proton donor. Asn143, Asn153, Asn181, Asn214, Asn226, Asn248, Asn287, Asn321, Asn336, Asn356, and Asn371 each carry an N-linked (GlcNAc...) asparagine glycan.

The protein belongs to the glycosyl hydrolase 56 family. In terms of processing, glycosylated; glycosylation is critical for enzymatic activity. Female salivary gland (at protein level).

Its subcellular location is the secreted. It catalyses the reaction Random hydrolysis of (1-&gt;4)-linkages between N-acetyl-beta-D-glucosamine and D-glucuronate residues in hyaluronate.. Functionally, hydrolyzes high molecular weight hyaluronic acid to produce small oligosaccharides. Up-regulates expression of CSF2, CSF3, LIF, CXCL1, CXCL2 and CXCL8 in cultured human dermal microvascular endothelial cells. Promotes host neutrophil recruitment at the injection site. (Microbial infection) Probably promotes Leishmania major infection in the host. This chain is Salivary hyaluronidase, found in Lutzomyia longipalpis (Sand fly).